A 166-amino-acid polypeptide reads, in one-letter code: CDP-archaeol synthase (166 aa).

The next 5 membrane-spanning stretches (helical) occupy residues 1 to 21 (MPII…LVAN), 55 to 75 (LLVA…FLGI), 78 to 98 (IYVS…GAFI), 110 to 130 (AIGL…IISK), and 131 to 151 (ISLN…LHIL).

This sequence belongs to the CDP-archaeol synthase family. It depends on Mg(2+) as a cofactor.

The protein resides in the cell membrane. It catalyses the reaction 2,3-bis-O-(geranylgeranyl)-sn-glycerol 1-phosphate + CTP + H(+) = CDP-2,3-bis-O-(geranylgeranyl)-sn-glycerol + diphosphate. It functions in the pathway membrane lipid metabolism; glycerophospholipid metabolism. In terms of biological role, catalyzes the formation of CDP-2,3-bis-(O-geranylgeranyl)-sn-glycerol (CDP-archaeol) from 2,3-bis-(O-geranylgeranyl)-sn-glycerol 1-phosphate (DGGGP) and CTP. This reaction is the third ether-bond-formation step in the biosynthesis of archaeal membrane lipids. This chain is CDP-archaeol synthase, found in Sulfurisphaera tokodaii (strain DSM 16993 / JCM 10545 / NBRC 100140 / 7) (Sulfolobus tokodaii).